The primary structure comprises 201 residues: Large ribosomal subunit protein bL25 (201 aa).

Belongs to the bacterial ribosomal protein bL25 family. CTC subfamily. In terms of assembly, part of the 50S ribosomal subunit; part of the 5S rRNA/L5/L18/L25 subcomplex. Contacts the 5S rRNA. Binds to the 5S rRNA independently of L5 and L18.

In terms of biological role, this is one of the proteins that binds to the 5S RNA in the ribosome where it forms part of the central protuberance. The polypeptide is Large ribosomal subunit protein bL25 (Ectopseudomonas mendocina (strain ymp) (Pseudomonas mendocina)).